We begin with the raw amino-acid sequence, 626 residues long: ATP-dependent zinc metalloprotease FtsH (626 aa).

The Cytoplasmic portion of the chain corresponds to 1-5 (MNFRN). The chain crosses the membrane as a helical span at residues 6–26 (LAIWLVIVAVLGGVFVVSQNS). Over 27-98 (RTKSSSEISY…DVKFKSGSIS (72 aa)) the chain is Periplasmic. A helical transmembrane segment spans residues 99–119 (FLAILVQLLPILLVVGVWLFL). Topologically, residues 120–626 (MRQMQGGAKG…SPGAGASVTA (507 aa)) are cytoplasmic. 191–198 (GPPGTGKT) contacts ATP. His413 is a Zn(2+) binding site. Glu414 is an active-site residue. Zn(2+)-binding residues include His417 and Asp491.

This sequence in the central section; belongs to the AAA ATPase family. It in the C-terminal section; belongs to the peptidase M41 family. In terms of assembly, homohexamer. Zn(2+) is required as a cofactor.

It is found in the cell inner membrane. In terms of biological role, acts as a processive, ATP-dependent zinc metallopeptidase for both cytoplasmic and membrane proteins. Plays a role in the quality control of integral membrane proteins. Absence of FtsH leads to increased sigma-32 levels, which suggests, in analogy to E.coli, that sigma-32 is a substrate for FtsH. May play a role in the general stress response, as overexpression leads to improved resistance to salt stress. The chain is ATP-dependent zinc metalloprotease FtsH from Caulobacter vibrioides (strain NA1000 / CB15N) (Caulobacter crescentus).